We begin with the raw amino-acid sequence, 288 residues long: Formamidopyrimidine-DNA glycosylase (288 aa).

Residue Pro2 is the Schiff-base intermediate with DNA of the active site. Glu3 acts as the Proton donor in catalysis. Lys58 functions as the Proton donor; for beta-elimination activity in the catalytic mechanism. His99, Arg118, and Lys161 together coordinate DNA. The FPG-type zinc finger occupies 252–288 (RVYDREAEPCPREGCGGTIKRIVQAGRSTFFCAKCQR). Arg278 serves as the catalytic Proton donor; for delta-elimination activity.

The protein belongs to the FPG family. In terms of assembly, monomer. Zn(2+) is required as a cofactor.

It carries out the reaction Hydrolysis of DNA containing ring-opened 7-methylguanine residues, releasing 2,6-diamino-4-hydroxy-5-(N-methyl)formamidopyrimidine.. It catalyses the reaction 2'-deoxyribonucleotide-(2'-deoxyribose 5'-phosphate)-2'-deoxyribonucleotide-DNA = a 3'-end 2'-deoxyribonucleotide-(2,3-dehydro-2,3-deoxyribose 5'-phosphate)-DNA + a 5'-end 5'-phospho-2'-deoxyribonucleoside-DNA + H(+). Functionally, involved in base excision repair of DNA damaged by oxidation or by mutagenic agents. Acts as a DNA glycosylase that recognizes and removes damaged bases. Has a preference for oxidized purines, such as 7,8-dihydro-8-oxoguanine (8-oxoG). Has AP (apurinic/apyrimidinic) lyase activity and introduces nicks in the DNA strand. Cleaves the DNA backbone by beta-delta elimination to generate a single-strand break at the site of the removed base with both 3'- and 5'-phosphates. In Beijerinckia indica subsp. indica (strain ATCC 9039 / DSM 1715 / NCIMB 8712), this protein is Formamidopyrimidine-DNA glycosylase.